Reading from the N-terminus, the 343-residue chain is Ribosomal RNA small subunit methyltransferase C (343 aa).

This sequence belongs to the methyltransferase superfamily. RsmC family. As to quaternary structure, monomer.

It is found in the cytoplasm. The enzyme catalyses guanosine(1207) in 16S rRNA + S-adenosyl-L-methionine = N(2)-methylguanosine(1207) in 16S rRNA + S-adenosyl-L-homocysteine + H(+). In terms of biological role, specifically methylates the guanine in position 1207 of 16S rRNA in the 30S particle. The chain is Ribosomal RNA small subunit methyltransferase C from Escherichia coli O17:K52:H18 (strain UMN026 / ExPEC).